A 476-amino-acid chain; its full sequence is Ribulose bisphosphate carboxylase large chain (476 aa).

Substrate-binding residues include Asn-124 and Thr-174. Lys-176 functions as the Proton acceptor in the catalytic mechanism. Lys-178 serves as a coordination point for substrate. Residues Lys-202, Asp-204, and Glu-205 each coordinate Mg(2+). Lys-202 is modified (N6-carboxylysine). His-295 functions as the Proton acceptor in the catalytic mechanism. Substrate is bound by residues Arg-296, His-328, and Ser-380.

This sequence belongs to the RuBisCO large chain family. Type I subfamily. As to quaternary structure, heterohexadecamer of 8 large chains and 8 small chains; disulfide-linked. The disulfide link is formed within the large subunit homodimers. Mg(2+) is required as a cofactor. The disulfide bond which can form in the large chain dimeric partners within the hexadecamer appears to be associated with oxidative stress and protein turnover.

It localises to the carboxysome. The enzyme catalyses 2 (2R)-3-phosphoglycerate + 2 H(+) = D-ribulose 1,5-bisphosphate + CO2 + H2O. It carries out the reaction D-ribulose 1,5-bisphosphate + O2 = 2-phosphoglycolate + (2R)-3-phosphoglycerate + 2 H(+). Functionally, ruBisCO catalyzes two reactions: the carboxylation of D-ribulose 1,5-bisphosphate, the primary event in carbon dioxide fixation, as well as the oxidative fragmentation of the pentose substrate in the photorespiration process. Both reactions occur simultaneously and in competition at the same active site. The protein is Ribulose bisphosphate carboxylase large chain of Trichormus variabilis (strain ATCC 29413 / PCC 7937) (Anabaena variabilis).